Consider the following 460-residue polypeptide: Cysteine--tRNA ligase (460 aa).

Residue Cys28 coordinates Zn(2+). The short motif at 30–40 (MTVYDYCHLGH) is the 'HIGH' region element. Zn(2+)-binding residues include Cys209, His234, and Glu238. The 'KMSKS' region signature appears at 266 to 270 (KMSKS). Lys269 lines the ATP pocket.

This sequence belongs to the class-I aminoacyl-tRNA synthetase family. As to quaternary structure, monomer. It depends on Zn(2+) as a cofactor.

The protein resides in the cytoplasm. It carries out the reaction tRNA(Cys) + L-cysteine + ATP = L-cysteinyl-tRNA(Cys) + AMP + diphosphate. This Pseudomonas putida (strain GB-1) protein is Cysteine--tRNA ligase.